Consider the following 317-residue polypeptide: Putative peptide import ATP-binding protein BruAb2_0797 (317 aa).

Positions 7–250 (LSVRGLAKHY…PQHPYTRALL (244 aa)) constitute an ABC transporter domain. 43 to 50 (GESGSGKT) serves as a coordination point for ATP.

The protein belongs to the ABC transporter superfamily. In terms of assembly, the complex is composed of two ATP-binding proteins (BruAb2_0796 and BruAb2_0797), two transmembrane proteins (BruAb2_0794) and a solute-binding protein (BruAb2_0792).

The protein localises to the cell inner membrane. Functionally, probably part of an ABC transporter complex that could be involved in peptide import. Probably responsible for energy coupling to the transport system. In Brucella abortus biovar 1 (strain 9-941), this protein is Putative peptide import ATP-binding protein BruAb2_0797.